We begin with the raw amino-acid sequence, 381 residues long: uncharacterized protein (381 aa).

9 consecutive transmembrane segments (helical) span residues 59–79 (LITL…LYYM), 84–104 (GVAP…YQTM), 147–167 (VGVN…FFMA), 190–210 (SMMA…FNTI), 222–242 (LVLL…TFSI), 250–270 (ILTN…SIYW), 284–304 (HYFM…LILA), 311–331 (LSPI…IYKF), and 344–364 (VYFF…VTSL).

This sequence belongs to the CDP-alcohol phosphatidyltransferase class-I family.

The protein localises to the membrane. This is an uncharacterized protein from Dictyostelium discoideum (Social amoeba).